We begin with the raw amino-acid sequence, 227 residues long: Pre-hexon-linking protein VIII (227 aa).

Thr64 carries the post-translational modification Phosphothreonine; by host. The propeptide occupies 112-157; that stretch reads FRHRVRSPGQGITHLKIRGRGIQLNDESVSSSLGLRPDGTFQIGGA. Ser118 and Ser174 each carry phosphoserine; by host.

The protein belongs to the adenoviridae hexon-linking protein family. Interacts with the peripentonal hexons as well as the hexons in the facets. Part of a complex composed of the core-capsid bridging protein, the endosome lysis protein VI and the hexon-linking protein VIII; these interactions bridge the virus core to the capsid. Post-translationally, cleaved by the viral protease during virion maturation. May cause the middle segment to be shed from the capsid.

The protein localises to the virion. Its subcellular location is the host nucleus. Functionally, structural component of the virion that acts as a cement protein on the capsid interior and which glue the peripentonal hexons and group-of-nine hexons together. This chain is Pre-hexon-linking protein VIII, found in Homo sapiens (Human).